The following is a 437-amino-acid chain: Trigger factor (437 aa).

The region spanning 161–246 is the PPIase FKBP-type domain; sequence GDQVNINFVG…VNSVSEAVLP (86 aa).

The protein belongs to the FKBP-type PPIase family. Tig subfamily.

The protein resides in the cytoplasm. The catalysed reaction is [protein]-peptidylproline (omega=180) = [protein]-peptidylproline (omega=0). Involved in protein export. Acts as a chaperone by maintaining the newly synthesized protein in an open conformation. Functions as a peptidyl-prolyl cis-trans isomerase. In Cellvibrio japonicus (strain Ueda107) (Pseudomonas fluorescens subsp. cellulosa), this protein is Trigger factor.